The primary structure comprises 105 residues: Small cysteine and glycine repeat-containing protein 6 (105 aa).

Residues C4–G83 form a 13 X 2 AA repeats of CG region.

Belongs to the KRTAP type 28 family.

Its function is as follows. In the hair cortex, hair keratin intermediate filaments are embedded in an interfilamentous matrix, consisting of hair keratin-associated proteins (KRTAP), which are essential for the formation of a rigid and resistant hair shaft through their extensive disulfide bond cross-linking with abundant cysteine residues of hair keratins. The matrix proteins include the high-sulfur and high-glycine-tyrosine keratins. This Homo sapiens (Human) protein is Small cysteine and glycine repeat-containing protein 6.